The chain runs to 234 residues: Large ribosomal subunit protein uL1 (234 aa).

It belongs to the universal ribosomal protein uL1 family. Part of the 50S ribosomal subunit.

Its function is as follows. Binds directly to 23S rRNA. The L1 stalk is quite mobile in the ribosome, and is involved in E site tRNA release. Functionally, protein L1 is also a translational repressor protein, it controls the translation of the L11 operon by binding to its mRNA. This chain is Large ribosomal subunit protein uL1, found in Yersinia enterocolitica serotype O:8 / biotype 1B (strain NCTC 13174 / 8081).